The following is a 212-amino-acid chain: Regulatory protein RecX (212 aa).

This sequence belongs to the RecX family.

The protein resides in the cytoplasm. Functionally, modulates RecA activity. This is Regulatory protein RecX from Clostridium botulinum (strain Eklund 17B / Type B).